A 507-amino-acid chain; its full sequence is Histidine ammonia-lyase (507 aa).

The segment at residues A141–G143 is a cross-link (5-imidazolinone (Ala-Gly)). Residue S142 is modified to 2,3-didehydroalanine (Ser).

Belongs to the PAL/histidase family. Post-translationally, contains an active site 4-methylidene-imidazol-5-one (MIO), which is formed autocatalytically by cyclization and dehydration of residues Ala-Ser-Gly.

Its subcellular location is the cytoplasm. The catalysed reaction is L-histidine = trans-urocanate + NH4(+). Its pathway is amino-acid degradation; L-histidine degradation into L-glutamate; N-formimidoyl-L-glutamate from L-histidine: step 1/3. In Burkholderia lata (strain ATCC 17760 / DSM 23089 / LMG 22485 / NCIMB 9086 / R18194 / 383), this protein is Histidine ammonia-lyase.